The sequence spans 241 residues: uncharacterized protein (241 aa).

One can recognise a GGDEF domain in the interval 84-216; it reads TVVSLVVCDL…APGPVVAGRD (133 aa). Positions 215–241 are disordered; sequence RDGEVVRLADSPPKSAHDRRRLRGNRP. The span at 231–241 shows a compositional bias: basic residues; sequence HDRRRLRGNRP.

This is an uncharacterized protein from Streptomyces griseus.